A 34-amino-acid chain; its full sequence is Photosystem II reaction center protein T (34 aa).

A helical transmembrane segment spans residues 3 to 23 (SVAYILIFTLTIGTLFFAVAF).

This sequence belongs to the PsbT family. As to quaternary structure, PSII is composed of 1 copy each of membrane proteins PsbA, PsbB, PsbC, PsbD, PsbE, PsbF, PsbH, PsbI, PsbJ, PsbK, PsbL, PsbM, PsbT, PsbX, PsbY, PsbZ, Psb30/Ycf12, peripheral proteins PsbO, CyanoQ (PsbQ), PsbU, PsbV and a large number of cofactors. It forms dimeric complexes.

Its subcellular location is the cellular thylakoid membrane. Functionally, found at the monomer-monomer interface of the photosystem II (PS II) dimer, plays a role in assembly and dimerization of PSII. PSII is a light-driven water plastoquinone oxidoreductase, using light energy to abstract electrons from H(2)O, generating a proton gradient subsequently used for ATP formation. This is Photosystem II reaction center protein T from Mastigocladus laminosus (Fischerella sp.).